Here is an 853-residue protein sequence, read N- to C-terminus: DNA mismatch repair protein MutS (853 aa).

Residue 613–620 coordinates ATP; that stretch reads GPNMGGKS.

Belongs to the DNA mismatch repair MutS family.

Its function is as follows. This protein is involved in the repair of mismatches in DNA. It is possible that it carries out the mismatch recognition step. This protein has a weak ATPase activity. This Vibrio atlanticus (strain LGP32) (Vibrio splendidus (strain Mel32)) protein is DNA mismatch repair protein MutS.